Here is a 318-residue protein sequence, read N- to C-terminus: tRNA dimethylallyltransferase (318 aa).

ATP is bound at residue 16 to 23 (GPTASGKT). Residue 18–23 (TASGKT) participates in substrate binding. Interaction with substrate tRNA stretches follow at residues 41–44 (DSAL), 165–169 (QRINR), 246–251 (RCVGYR), and 279–286 (KRQITWLR).

The protein belongs to the IPP transferase family. As to quaternary structure, monomer. Mg(2+) is required as a cofactor.

It carries out the reaction adenosine(37) in tRNA + dimethylallyl diphosphate = N(6)-dimethylallyladenosine(37) in tRNA + diphosphate. Functionally, catalyzes the transfer of a dimethylallyl group onto the adenine at position 37 in tRNAs that read codons beginning with uridine, leading to the formation of N6-(dimethylallyl)adenosine (i(6)A). This is tRNA dimethylallyltransferase from Actinobacillus succinogenes (strain ATCC 55618 / DSM 22257 / CCUG 43843 / 130Z).